Here is an 89-residue protein sequence, read N- to C-terminus: Small ribosomal subunit protein uS15 (89 aa).

This sequence belongs to the universal ribosomal protein uS15 family. As to quaternary structure, part of the 30S ribosomal subunit. Forms a bridge to the 50S subunit in the 70S ribosome, contacting the 23S rRNA.

One of the primary rRNA binding proteins, it binds directly to 16S rRNA where it helps nucleate assembly of the platform of the 30S subunit by binding and bridging several RNA helices of the 16S rRNA. In terms of biological role, forms an intersubunit bridge (bridge B4) with the 23S rRNA of the 50S subunit in the ribosome. The polypeptide is Small ribosomal subunit protein uS15 (Yersinia pseudotuberculosis serotype O:1b (strain IP 31758)).